Consider the following 626-residue polypeptide: Methanol dehydrogenase [cytochrome c] subunit 1 (626 aa).

Residues 1–27 (MSRFVTSVSALAMLALAPAALSSVAYA) form the signal peptide. A disulfide bridge links Cys-130 with Cys-131. The Ca(2+) site is built by Glu-204 and Asn-288. The Proton acceptor role is filled by Asp-330. Cys-413 and Cys-442 are disulfide-bonded.

The protein belongs to the bacterial PQQ dehydrogenase family. In terms of assembly, heterotetramer composed of 2 alpha and 2 beta subunits. Pyrroloquinoline quinone is required as a cofactor. Ca(2+) serves as cofactor.

It localises to the cell inner membrane. The enzyme catalyses 2 Fe(III)-[cytochrome cL] + a primary alcohol = 2 Fe(II)-[cytochrome cL] + an aldehyde + 2 H(+). In terms of biological role, catalyzes the oxidation of primary alcohols including methanol. The polypeptide is Methanol dehydrogenase [cytochrome c] subunit 1 (moxF) (Methylobacterium organophilum).